The sequence spans 348 residues: Rhodopsin (348 aa).

M1 is modified (N-acetylmethionine). At 1 to 36 the chain is on the extracellular side; sequence MNGTEGPNFYVPFSNKTGVVRSPFEYPQYYLAEPWQ. Residues N2 and N15 are each glycosylated (N-linked (GlcNAc...) asparagine). The chain crosses the membrane as a helical span at residues 37–61; the sequence is FSMLAAYMFLLIVLGFPINFLTLYV. Residues 62–73 are Cytoplasmic-facing; sequence TVQHKNVRTPLN. Residues 74 to 96 form a helical membrane-spanning segment; that stretch reads YILLNLAVANHFMVFGGFTTTLY. Over 97–110 the chain is Extracellular; it reads TSLHGYFVFGSTGC. A disulfide bond links C110 and C187. A helical transmembrane segment spans residues 111–133; that stretch reads NLEGFFATLGGEIALWSLVVLAI. The 'Ionic lock' involved in activated form stabilization signature appears at 134 to 136; it reads ERY. Residues 134–152 lie on the Cytoplasmic side of the membrane; the sequence is ERYVVVCKPMSNFRFGENH. Residues 153 to 173 form a helical membrane-spanning segment; it reads AIMGVAFTWVMALACAAPPLV. At 174 to 202 the chain is on the extracellular side; the sequence is GWSRYIPEGMQCSCGIDYYTLKPEVNNES. E201 serves as a coordination point for Zn(2+). Residues 203–224 traverse the membrane as a helical segment; sequence FVIYMFVVHFTIPMTIIFFCYG. Residues 225-252 are Cytoplasmic-facing; that stretch reads QLVFTVKEAAAQQQESATTQKAEKEVTR. Residues 253-274 traverse the membrane as a helical segment; sequence MVIIMVIAFLICWVPYASVAFY. The Extracellular segment spans residues 275-286; it reads IFTHQGSDFGPI. Zn(2+) is bound at residue Q279. Residues 287–308 form a helical membrane-spanning segment; that stretch reads LMTLPAFFAKSSAIYNPVIYIM. At K296 the chain carries N6-(retinylidene)lysine. Over 309–348 the chain is Cytoplasmic; the sequence is MNKQFRNCMLTTICCGKNPFGEEEGSTTASKTETSQVAPA. S-palmitoyl cysteine attachment occurs at residues C322 and C323. The segment at 330 to 348 is interaction with SAG; it reads EEEGSTTASKTETSQVAPA. Residue S334 is modified to Phosphoserine. Residues T335 and T336 each carry the phosphothreonine modification. S338 is subject to Phosphoserine. Phosphothreonine is present on residues T340 and T342. S343 is subject to Phosphoserine.

The protein belongs to the G-protein coupled receptor 1 family. Opsin subfamily. Homodimer. May form a complex composed of RHO, GRK1 and RCVRN in a Ca(2+)-dependent manner; RCVRN prevents the interaction between GRK1 and RHO. Interacts with GRK1. Interacts (phosphorylated form) with SAG. Interacts with GNAT1. Interacts with GNAT3. SAG and G-proteins compete for a common binding site. Interacts with PRCD; the interaction promotes PRCD stability. Forms a complex with ASAP1 and ARF4. Forms a complex with ASAP1, RAB11A, Rabin8/RAB3IP, ARF4 and RAB11FIP3; the complex regulates Golgi-to-cilia rhodopsin/RHO transport in photoreceptors. Phosphorylated on some or all of the serine and threonine residues present in the C-terminal region. In terms of processing, contains one covalently linked retinal chromophore. Upon light absorption, the covalently bound 11-cis-retinal is converted to all-trans-retinal. After hydrolysis of the Schiff base and release of the covalently bound all-trans-retinal, active rhodopsin is regenerated by binding of a fresh molecule of 11-cis-retinal.

The protein resides in the membrane. The protein localises to the cell projection. It localises to the cilium. It is found in the photoreceptor outer segment. In terms of biological role, photoreceptor required for image-forming vision at low light intensity. Required for photoreceptor cell viability after birth. Light-induced isomerization of 11-cis to all-trans retinal triggers a conformational change that activates signaling via G-proteins. Subsequent receptor phosphorylation mediates displacement of the bound G-protein alpha subunit by the arrestin SAG and terminates signaling. In Loxodonta africana (African elephant), this protein is Rhodopsin (RHO).